The following is a 1070-amino-acid chain: DNA-directed RNA polymerase subunit beta (1070 aa).

The protein belongs to the RNA polymerase beta chain family. As to quaternary structure, in plastids the minimal PEP RNA polymerase catalytic core is composed of four subunits: alpha, beta, beta', and beta''. When a (nuclear-encoded) sigma factor is associated with the core the holoenzyme is formed, which can initiate transcription.

The protein localises to the plastid. It localises to the chloroplast. The enzyme catalyses RNA(n) + a ribonucleoside 5'-triphosphate = RNA(n+1) + diphosphate. In terms of biological role, DNA-dependent RNA polymerase catalyzes the transcription of DNA into RNA using the four ribonucleoside triphosphates as substrates. The polypeptide is DNA-directed RNA polymerase subunit beta (Chloranthus spicatus (Chulantree)).